We begin with the raw amino-acid sequence, 138 residues long: uncharacterized protein (138 aa).

In terms of domain architecture, MsrB spans 9-133 (EDEWKKELGP…NSASLEFHNE (125 aa)). Zn(2+) contacts are provided by cysteine 49, cysteine 52, cysteine 97, and cysteine 100. The Nucleophile role is filled by cysteine 122.

Belongs to the MsrB Met sulfoxide reductase family. The cofactor is Zn(2+).

Its subcellular location is the cytoplasm. It is found in the nucleus. This is an uncharacterized protein from Schizosaccharomyces pombe (strain 972 / ATCC 24843) (Fission yeast).